The chain runs to 397 residues: MEKKTLSDIATQGKRVLMRVDFNVPLDENKNITDDKRIVESLPSIRKVIEEGGRLILMSHLGRPKGKVNAEFSLAPVAARLSELLDCPVGMAKDCIGTEVMQQVLALQDGEVLLLENLRFHAEEEANDADFAKELASLGEIYVNDAFGTAHRAHASTEGITHYVQTAVAGFLIERELRYLGKALQEPERPFVAILGGSKISGKIDVLENLFKKVDTVLIGGAMVFTFFKAQGYEVGKSLVEESKIELALSILEQAKAKGIKLLLPTDVVVTAEISADAESSVASIADMPNNLIGVDIGPETAAAYRNEIIGARTVLWNGPMGVFELDNFATGTIAVAQALADATAQGATTIVGGGDSAAAIAKAGLASEITHISTGGGASLEFLEGKELPGIAALNN.

Residues 21-23, arginine 37, 60-63, arginine 119, and arginine 152 contribute to the substrate site; these read DFN and HLGR. Residues lysine 203, glycine 294, glutamate 325, and 354–357 contribute to the ATP site; that span reads GGDS.

The protein belongs to the phosphoglycerate kinase family. As to quaternary structure, monomer.

It localises to the cytoplasm. It catalyses the reaction (2R)-3-phosphoglycerate + ATP = (2R)-3-phospho-glyceroyl phosphate + ADP. Its pathway is carbohydrate degradation; glycolysis; pyruvate from D-glyceraldehyde 3-phosphate: step 2/5. This is Phosphoglycerate kinase from Chlorobium chlorochromatii (strain CaD3).